A 112-amino-acid polypeptide reads, in one-letter code: Large ribosomal subunit protein bL21 (112 aa).

This sequence belongs to the bacterial ribosomal protein bL21 family. As to quaternary structure, part of the 50S ribosomal subunit. Contacts protein L20.

Its function is as follows. This protein binds to 23S rRNA in the presence of protein L20. The sequence is that of Large ribosomal subunit protein bL21 from Buchnera aphidicola subsp. Baizongia pistaciae (strain Bp).